Here is a 976-residue protein sequence, read N- to C-terminus: Collagen alpha-1(I) chain (976 aa).

Ser-1 is modified (phosphoserine). Residues 1 to 976 (SAGGISVPGP…PGPPGPPGPP (976 aa)) form a disordered region. 4-hydroxyproline occurs at positions 20, 23, 26, 35, 38, 41, 55, 70, 76, 85, and 91. The segment covering 58-72 (NGDDGEAGKPGRPGE) has biased composition (basic and acidic residues). Lys-94 is modified (5-hydroxylysine; alternate). An O-linked (Gal...) hydroxylysine; alternate glycan is attached at Lys-94. Phosphoserine is present on Ser-100. Low complexity-rich tracts occupy residues 108–118 (DAGPAGPKGAP) and 132–150 (PGAS…TGAA). Residues Pro-118, Pro-132, Pro-153, Pro-162, Pro-165, Pro-192, Pro-195, Pro-207, Pro-213, Pro-222, Pro-228, Pro-231, and Pro-246 each carry the 4-hydroxyproline modification. The span at 152-164 (PPGPTGPAGPPGF) shows a compositional bias: pro residues. The span at 198-237 (AGAAGPAGNPGADGQPGAKGANGAPGIAGAPGFPGARGPS) shows a compositional bias: low complexity. Lys-249 is modified (5-hydroxylysine). A 4-hydroxyproline mark is found at Pro-255, Pro-258, Pro-266, Pro-275, Pro-290, Pro-296, Pro-304, and Pro-310. Gly residues predominate over residues 294 to 308 (GLPGPGERGGPGSRG). Position 319 is a 5-hydroxylysine (Lys-319). 25 positions are modified to 4-hydroxyproline: Pro-328, Pro-337, Pro-343, Pro-349, Pro-358, Pro-361, Pro-370, Pro-379, Pro-385, Pro-397, Pro-406, Pro-415, Pro-418, Pro-436, Pro-453, Pro-459, Pro-465, Pro-471, Pro-477, Pro-483, Pro-495, Pro-504, Pro-517, Pro-523, and Pro-532. Low complexity predominate over residues 352-378 (KGLTGSPGSPGPDGKTGPPGPAGQDGR). Residues 387–406 (ARGQAGVMGFPGPKGAAGEP) show a composition bias toward low complexity. Residues 465-474 (PGEAGKPGEQ) show a composition bias toward low complexity. Lys-544 is modified (5-hydroxylysine). A 4-hydroxyproline mark is found at Pro-550, Pro-565, and Pro-571. Residues 577–591 (SGPSGPAGPTGARGA) are compositionally biased toward low complexity. Ser-580 carries the phosphoserine modification. 4-hydroxyproline is present on residues Pro-592, Pro-598, Pro-601, Pro-610, Pro-616, Pro-634, Pro-643, and Pro-652. Positions 604–631 (AGFAGPPGADGQPGAKGEPGDAGAKGDA) are enriched in low complexity. Position 655 is a 5-hydroxylysine (Lys-655). A compositionally biased stretch (low complexity) spans 660 to 676 (SAGPPGATGFPGAAGRV). Residues Pro-664 and Pro-670 each carry the 4-hydroxyproline modification. Pro-678 carries the 3-hydroxyproline modification. Residues Pro-679, Pro-688, Pro-691, Pro-718, Pro-726, Pro-735, Pro-753, Pro-762, Pro-765, Pro-771, Pro-786, Pro-792, Pro-798, Pro-806, and Pro-812 each carry the 4-hydroxyproline modification. The segment covering 723–735 (KGSPGADGPAGAP) has biased composition (low complexity). Residues 785–795 (PPGPMGPPGLA) show a composition bias toward pro residues. Lys-821 is subject to 5-hydroxylysine. Residues 829–844 (PGPPGAPGAPGAPGPV) are compositionally biased toward pro residues. Residues Pro-832, Pro-835, and Pro-838 each carry the 4-hydroxyproline modification. A compositionally biased stretch (low complexity) spans 864–878 (AGPAGARGPAGPQGP). Residues 879–893 (RGDKGETGEQGDRGI) are compositionally biased toward basic and acidic residues. A 5-hydroxylysine modification is found at Lys-882. A 5-hydroxylysine; alternate modification is found at Lys-894. Lys-894 carries an O-linked (Gal...) hydroxylysine; alternate glycan. 4-hydroxyproline occurs at positions 907, 910, 928, and 943. The span at 910–943 (PGEQGPSGASGPAGPRGPPGSAGSPGKDGLNGLP) shows a compositional bias: low complexity. Pro-948 is modified (3-hydroxyproline). Pro-949 carries the post-translational modification 4-hydroxyproline. The segment covering 961–976 (VGPPGPPGPPGPPGPP) has biased composition (pro residues). Pro-963 carries the post-translational modification 3-hydroxyproline. A 4-hydroxyproline modification is found at Pro-964. Position 966 is a 3-hydroxyproline (Pro-966). Pro-967 carries the post-translational modification 4-hydroxyproline. A 3-hydroxyproline modification is found at Pro-969. Pro-970, Pro-973, and Pro-976 each carry 4-hydroxyproline.

The protein belongs to the fibrillar collagen family. Trimers of one alpha 2(I) and two alpha 1(I) chains. Contains mostly 4-hydroxyproline. Proline residues at the third position of the tripeptide repeating unit (G-X-Y) are hydroxylated in some or all of the chains. In terms of processing, contains 3-hydroxyproline at a few sites. This modification occurs on the first proline residue in the sequence motif Gly-Pro-Hyp, where Hyp is 4-hydroxyproline. Post-translationally, lysine residues at the third position of the tripeptide repeating unit (G-X-Y) are 5-hydroxylated in some or all of the chains. O-glycosylated on hydroxylated lysine residues. The O-linked glycan consists of a Glc-Gal disaccharide. As to expression, expressed in bones.

Its subcellular location is the secreted. The protein resides in the extracellular space. It is found in the extracellular matrix. Functionally, type I collagen is a member of group I collagen (fibrillar forming collagen). In Acratocnus ye (Hispaniolan ground sloth), this protein is Collagen alpha-1(I) chain.